The sequence spans 1960 residues: Intraflagellar transport protein 172 (1960 aa).

2 WD repeats span residues 63–103 and 328–367; these read SNKD…TDKK and GFLP…YRYC. 3 TPR repeats span residues 1064–1098, 1362–1395, and 1397–1428; these read KADQ…QSYR, CDLF…QEIV, and MYLD…RSIR.

This sequence belongs to the IFT172 family.

The protein localises to the cell projection. It localises to the cilium. Its subcellular location is the flagellum. It is found in the cytoplasm. The protein resides in the cytoskeleton. The protein localises to the flagellum axoneme. It localises to the flagellum basal body. Its function is as follows. Component of the intraflagellar transport complex B (IFT-B) involved in flagellar assembly. The polypeptide is Intraflagellar transport protein 172 (Giardia intestinalis (strain ATCC 50803 / WB clone C6) (Giardia lamblia)).